Consider the following 431-residue polypeptide: Isochorismate synthase MenF (431 aa).

K190 acts as the Proton acceptor in catalysis. E240 serves as the catalytic Proton donor. The Mg(2+) site is built by E284 and E416.

Belongs to the isochorismate synthase family. As to quaternary structure, homodimer. Requires Mg(2+) as cofactor.

The catalysed reaction is chorismate = isochorismate. Its pathway is quinol/quinone metabolism; 1,4-dihydroxy-2-naphthoate biosynthesis; 1,4-dihydroxy-2-naphthoate from chorismate: step 1/7. It participates in quinol/quinone metabolism; menaquinone biosynthesis. Catalyzes the conversion of chorismate to isochorismate. Can also catalyze the reverse reaction, but with a lower efficiency. The sequence is that of Isochorismate synthase MenF from Escherichia coli (strain K12).